Consider the following 103-residue polypeptide: MNVTDVKIRRVVAEGRMKALASITLDHEFVVHDLRVIEGNSGLFVAMPSKRTQEGIFRDVAHPINALMRKKVEDSVLEAYAIREENGEASELELAALEATDPS.

This sequence belongs to the SpoVG family.

Its function is as follows. Could be involved in septation. This Exiguobacterium sibiricum (strain DSM 17290 / CCUG 55495 / CIP 109462 / JCM 13490 / 255-15) protein is Putative septation protein SpoVG.